The sequence spans 552 residues: Putative transport protein HS_1470 (552 aa).

A run of 5 helical transmembrane segments spans residues 4–24 (IAIT…IGHW), 28–48 (GVGL…HFMN), 67–87 (LILF…ASLL), 95–115 (GLAT…YKVV), and 157–177 (MAYA…MWLI). RCK C-terminal domains are found at residues 190–275 (KQFQ…VIGE) and 277–360 (IDMP…IIGN). 6 helical membrane-spanning segments follow: residues 370–390 (MLPV…PFYI), 402–424 (AGGP…LYWF), 438–458 (IVLF…DTLV), 463–483 (LEWM…TGII), 495–515 (LCGL…ANAI), and 529–549 (VYPL…ILLW).

This sequence belongs to the AAE transporter (TC 2.A.81) family. YidE subfamily.

It is found in the cell membrane. The protein is Putative transport protein HS_1470 of Histophilus somni (strain 129Pt) (Haemophilus somnus).